The primary structure comprises 1199 residues: DNA-directed RNA polymerase subunit beta' (1199 aa).

Residues Cys-60, Cys-62, Cys-75, and Cys-78 each contribute to the Zn(2+) site. Residues Asp-449, Asp-451, and Asp-453 each contribute to the Mg(2+) site. Cys-818, Cys-892, Cys-899, and Cys-902 together coordinate Zn(2+).

This sequence belongs to the RNA polymerase beta' chain family. The RNAP catalytic core consists of 2 alpha, 1 beta, 1 beta' and 1 omega subunit. When a sigma factor is associated with the core the holoenzyme is formed, which can initiate transcription. The cofactor is Mg(2+). Requires Zn(2+) as cofactor.

It carries out the reaction RNA(n) + a ribonucleoside 5'-triphosphate = RNA(n+1) + diphosphate. Functionally, DNA-dependent RNA polymerase catalyzes the transcription of DNA into RNA using the four ribonucleoside triphosphates as substrates. The polypeptide is DNA-directed RNA polymerase subunit beta' (Exiguobacterium sibiricum (strain DSM 17290 / CCUG 55495 / CIP 109462 / JCM 13490 / 255-15)).